The following is a 3183-amino-acid chain: WD repeat- and FYVE domain-containing protein 4 (3183 aa).

Basic and acidic residues predominate over residues 1-15; that stretch reads MEAEDLSKTEDRPED. 4 disordered regions span residues 1–37, 790–811, 938–977, and 1828–1852; these read MEAE…EGQS, AGQE…GKFK, KSLH…QALR, and KETT…HAAE. Low complexity predominate over residues 1832–1852; it reads SESSRNTSSPGASAEASHAAE. The 126-residue stretch at 2383–2508 folds into the BEACH-type PH domain; sequence LDGEKVSQKV…DRSKALKSFS (126 aa). The BEACH domain occupies 2525 to 2819; it reads NLRKHPGFDR…QIFTKPHPSR (295 aa). The segment at 2812-2836 is disordered; it reads FTKPHPSRNTTGKNPGPGKDASTPV. WD repeat units follow at residues 2930-2969, 2979-3018, 3021-3060, 3070-3108, and 3150-3183; these read LAAW…GRPR, GHTQ…RVAC, VHRE…ASIT, TCCC…MPVP, and KASP…SADG.

Interacts with HSP90AB1. As to expression, highly expressed in immune tissues, especially B lymphocytes.

The protein resides in the early endosome. It localises to the endoplasmic reticulum. Functionally, plays a critical role in the regulation of cDC1-mediated cross-presentation of viral and tumor antigens in dendritic cells. Mechanistically, acts near the plasma membrane and interacts with endosomal membranes to promote endosomal-to-cytosol antigen trafficking. Also plays a role in B-cell survival through regulation of autophagy. This is WD repeat- and FYVE domain-containing protein 4 from Mus musculus (Mouse).